Consider the following 376-residue polypeptide: Queuine tRNA-ribosyltransferase (376 aa).

The active-site Proton acceptor is the Asp-93. Residues Asp-93–Phe-97, Asp-147, Gln-190, and Gly-217 each bind substrate. Residues Gly-248–Asp-254 form an RNA binding region. Asp-267 functions as the Nucleophile in the catalytic mechanism. Residues Cys-305, Cys-307, Cys-310, and His-336 each coordinate Zn(2+).

This sequence belongs to the queuine tRNA-ribosyltransferase family. Homodimer. Within each dimer, one monomer is responsible for RNA recognition and catalysis, while the other monomer binds to the replacement base PreQ1. Requires Zn(2+) as cofactor.

It catalyses the reaction 7-aminomethyl-7-carbaguanine + guanosine(34) in tRNA = 7-aminomethyl-7-carbaguanosine(34) in tRNA + guanine. The protein operates within tRNA modification; tRNA-queuosine biosynthesis. Functionally, catalyzes the base-exchange of a guanine (G) residue with the queuine precursor 7-aminomethyl-7-deazaguanine (PreQ1) at position 34 (anticodon wobble position) in tRNAs with GU(N) anticodons (tRNA-Asp, -Asn, -His and -Tyr). Catalysis occurs through a double-displacement mechanism. The nucleophile active site attacks the C1' of nucleotide 34 to detach the guanine base from the RNA, forming a covalent enzyme-RNA intermediate. The proton acceptor active site deprotonates the incoming PreQ1, allowing a nucleophilic attack on the C1' of the ribose to form the product. After dissociation, two additional enzymatic reactions on the tRNA convert PreQ1 to queuine (Q), resulting in the hypermodified nucleoside queuosine (7-(((4,5-cis-dihydroxy-2-cyclopenten-1-yl)amino)methyl)-7-deazaguanosine). This is Queuine tRNA-ribosyltransferase from Jannaschia sp. (strain CCS1).